Reading from the N-terminus, the 1240-residue chain is Cohesin subunit SA-3 (1240 aa).

Over residues 1–25 (MPTLWSPSTQHHGSSSGSESSPLQK) the composition is skewed to low complexity. Positions 1-108 (MPTLWSPSTQ…VSSGNGKNES (108 aa)) are disordered. Positions 97–108 (RIVSSGNGKNES) are enriched in polar residues. The SCD domain occupies 324–409 (FVHRYRDILP…NRFKDRMVSM (86 aa)). Disordered regions lie at residues 1077 to 1154 (AEAS…PELI) and 1213 to 1240 (DKML…MEDF). The span at 1115 to 1125 (GPTTPTLTSTA) shows a compositional bias: polar residues. Residues 1126–1141 (VKRKQSLRTVGKKQKG) show a composition bias toward basic residues. The residue at position 1218 (serine 1218) is a Phosphoserine.

The protein belongs to the SCC3 family. Component of the meiosis-specific cohesin complex, which also contains the SMC1 (SMC1A or SMC1B) and SMC3 heterodimer. Such complex likely contains RAD21, or the meiosis-specific related protein REC8. Interacts with CCDC79/TERB1; recruiting cohesin to telomeres to develop structural rigidity. Post-translationally, phosphorylated. Testis specific.

Its subcellular location is the nucleus. The protein resides in the chromosome. It is found in the centromere. Meiosis specific component of cohesin complex. The cohesin complex is required for the cohesion of sister chromatids after DNA replication. The cohesin complex apparently forms a large proteinaceous ring within which sister chromatids can be trapped. At anaphase, the complex is cleaved and dissociates from chromatin, allowing sister chromatids to segregate. The meiosis-specific cohesin complex probably replaces mitosis specific cohesin complex when it dissociates from chromatin during prophase I. In Mus musculus (Mouse), this protein is Cohesin subunit SA-3 (Stag3).